The primary structure comprises 141 residues: Large ribosomal subunit protein uL13 (141 aa).

It belongs to the universal ribosomal protein uL13 family. Part of the 50S ribosomal subunit.

This protein is one of the early assembly proteins of the 50S ribosomal subunit, although it is not seen to bind rRNA by itself. It is important during the early stages of 50S assembly. This is Large ribosomal subunit protein uL13 from Helicobacter acinonychis (strain Sheeba).